A 350-amino-acid chain; its full sequence is Dihydroorotase (350 aa).

Positions 17 and 19 each coordinate Zn(2+). Substrate contacts are provided by residues 19-21 and Asn45; that span reads HLR. The Zn(2+) site is built by Lys103, His140, and His178. The residue at position 103 (Lys103) is an N6-carboxylysine. His140 lines the substrate pocket. Position 224 (Leu224) interacts with substrate. Position 252 (Asp252) interacts with Zn(2+). Asp252 is an active-site residue. The substrate site is built by His256 and Ala268.

Belongs to the metallo-dependent hydrolases superfamily. DHOase family. Class II DHOase subfamily. Homodimer. Zn(2+) serves as cofactor.

The catalysed reaction is (S)-dihydroorotate + H2O = N-carbamoyl-L-aspartate + H(+). It functions in the pathway pyrimidine metabolism; UMP biosynthesis via de novo pathway; (S)-dihydroorotate from bicarbonate: step 3/3. Catalyzes the reversible cyclization of carbamoyl aspartate to dihydroorotate. The chain is Dihydroorotase from Buchnera aphidicola subsp. Acyrthosiphon pisum (strain APS) (Acyrthosiphon pisum symbiotic bacterium).